The primary structure comprises 154 residues: Low molecular weight protein-tyrosine-phosphatase PtpA (154 aa).

The active-site Nucleophile is the Cys-8. Arg-14 is an active-site residue. Asp-120 serves as the catalytic Proton donor.

Belongs to the low molecular weight phosphotyrosine protein phosphatase family. As to quaternary structure, interacts with host CORO1A. Post-translationally, phosphorylations at Tyr-122 and Tyr-123 are essential for phosphatase activity.

The protein localises to the secreted. It catalyses the reaction O-phospho-L-tyrosyl-[protein] + H2O = L-tyrosyl-[protein] + phosphate. Functionally, secreted tyrosine phosphatase that plays a critical role during infection as a bacterial effector protein that counteracts host defenses. Required for intramacrophage survival. The protein is Low molecular weight protein-tyrosine-phosphatase PtpA (ptpA) of Staphylococcus aureus (strain MSSA476).